Reading from the N-terminus, the 178-residue chain is Zinc finger CCHC domain-containing protein 10 (178 aa).

The CCHC-type zinc-finger motif lies at 21 to 38 (VRCQKCLEFGHWTYECKG). The disordered stretch occupies residues 66–178 (QSIGETNIEK…EPQKKKKKKK (113 aa)). 2 stretches are compositionally biased toward low complexity: residues 85-113 (SVTS…SSSS) and 121-164 (SLSS…SSES).

In Mus musculus (Mouse), this protein is Zinc finger CCHC domain-containing protein 10 (Zcchc10).